We begin with the raw amino-acid sequence, 302 residues long: Putative S-adenosyl-L-methionine-dependent methyltransferase MAB_4586c (302 aa).

Residues Asp122 and 151–152 (DL) each bind S-adenosyl-L-methionine.

This sequence belongs to the UPF0677 family.

Exhibits S-adenosyl-L-methionine-dependent methyltransferase activity. In Mycobacteroides abscessus (strain ATCC 19977 / DSM 44196 / CCUG 20993 / CIP 104536 / JCM 13569 / NCTC 13031 / TMC 1543 / L948) (Mycobacterium abscessus), this protein is Putative S-adenosyl-L-methionine-dependent methyltransferase MAB_4586c.